The chain runs to 82 residues: Putative membrane protein insertion efficiency factor (82 aa).

Belongs to the UPF0161 family.

It localises to the cell inner membrane. Could be involved in insertion of integral membrane proteins into the membrane. The chain is Putative membrane protein insertion efficiency factor from Francisella tularensis subsp. novicida (strain U112).